The chain runs to 345 residues: Biotin synthase (345 aa).

The 228-residue stretch at 60–287 (NQVQLSTLLS…RTMVRLSAGR (228 aa)) folds into the Radical SAM core domain. Residues C75, C79, and C82 each coordinate [4Fe-4S] cluster. The [2Fe-2S] cluster site is built by C119, C150, C210, and R282.

This sequence belongs to the radical SAM superfamily. Biotin synthase family. In terms of assembly, homodimer. It depends on [4Fe-4S] cluster as a cofactor. Requires [2Fe-2S] cluster as cofactor.

It carries out the reaction (4R,5S)-dethiobiotin + (sulfur carrier)-SH + 2 reduced [2Fe-2S]-[ferredoxin] + 2 S-adenosyl-L-methionine = (sulfur carrier)-H + biotin + 2 5'-deoxyadenosine + 2 L-methionine + 2 oxidized [2Fe-2S]-[ferredoxin]. It functions in the pathway cofactor biosynthesis; biotin biosynthesis; biotin from 7,8-diaminononanoate: step 2/2. Catalyzes the conversion of dethiobiotin (DTB) to biotin by the insertion of a sulfur atom into dethiobiotin via a radical-based mechanism. In Polaromonas naphthalenivorans (strain CJ2), this protein is Biotin synthase.